A 193-amino-acid chain; its full sequence is Adenine phosphoribosyltransferase (193 aa).

This sequence belongs to the purine/pyrimidine phosphoribosyltransferase family. In terms of assembly, homodimer.

Its subcellular location is the cytoplasm. The enzyme catalyses AMP + diphosphate = 5-phospho-alpha-D-ribose 1-diphosphate + adenine. It functions in the pathway purine metabolism; AMP biosynthesis via salvage pathway; AMP from adenine: step 1/1. In terms of biological role, catalyzes a salvage reaction resulting in the formation of AMP, that is energically less costly than de novo synthesis. This chain is Adenine phosphoribosyltransferase, found in Bifidobacterium longum (strain DJO10A).